The primary structure comprises 336 residues: 3-isopropylmalate dehydrogenase (336 aa).

Substrate is bound by residues Arg87, Arg97, Arg121, and Asp211. Asp211, Asp235, and Asp239 together coordinate Mg(2+). 271–283 (GSAPDIAGQGIAD) is a binding site for NAD(+).

It belongs to the isocitrate and isopropylmalate dehydrogenases family. LeuB type 2 subfamily. In terms of assembly, homodimer. Mg(2+) serves as cofactor. Mn(2+) is required as a cofactor.

The protein localises to the cytoplasm. The catalysed reaction is (2R,3S)-3-isopropylmalate + NAD(+) = 4-methyl-2-oxopentanoate + CO2 + NADH. The protein operates within amino-acid biosynthesis; L-leucine biosynthesis; L-leucine from 3-methyl-2-oxobutanoate: step 3/4. Catalyzes the oxidation of 3-carboxy-2-hydroxy-4-methylpentanoate (3-isopropylmalate) to 3-carboxy-4-methyl-2-oxopentanoate. The product decarboxylates to 4-methyl-2 oxopentanoate. The sequence is that of 3-isopropylmalate dehydrogenase from Rhodococcus opacus (strain B4).